We begin with the raw amino-acid sequence, 391 residues long: Na(+)/H(+) antiporter NhaA (391 aa).

Transmembrane regions (helical) follow at residues 14 to 34, 59 to 79, 95 to 115, 124 to 144, 154 to 174, 177 to 197, 213 to 233, 261 to 281, 287 to 307, 328 to 348, and 363 to 383; these read AGGI…NSPL, LLLW…GLEV, SLPT…YLFF, VGWA…MALL, VFLL…IALF, TDLS…LVAL, IILW…GVVI, FLIL…NVGF, PVPV…VLLF, IAPV…IASL, and IGIL…LSKV.

It belongs to the NhaA Na(+)/H(+) (TC 2.A.33) antiporter family.

It localises to the cell inner membrane. It catalyses the reaction Na(+)(in) + 2 H(+)(out) = Na(+)(out) + 2 H(+)(in). Its function is as follows. Na(+)/H(+) antiporter that extrudes sodium in exchange for external protons. The sequence is that of Na(+)/H(+) antiporter NhaA from Shewanella amazonensis (strain ATCC BAA-1098 / SB2B).